The chain runs to 450 residues: GTPase Der (450 aa).

EngA-type G domains follow at residues 3 to 170 (PTIA…LATG) and 183 to 356 (LKIA…AECS). GTP is bound by residues 9–16 (GRPNVGKS), 56–60 (DTGGL), 122–125 (NKVD), 189–196 (GRPNAGKS), 236–240 (DTAGV), and 301–304 (NKID). The KH-like domain occupies 357–441 (LRISTGQLNR…PLNIVFRSTF (85 aa)).

The protein belongs to the TRAFAC class TrmE-Era-EngA-EngB-Septin-like GTPase superfamily. EngA (Der) GTPase family. As to quaternary structure, associates with the 50S ribosomal subunit.

Its function is as follows. GTPase that plays an essential role in the late steps of ribosome biogenesis. This Maridesulfovibrio salexigens (strain ATCC 14822 / DSM 2638 / NCIMB 8403 / VKM B-1763) (Desulfovibrio salexigens) protein is GTPase Der.